We begin with the raw amino-acid sequence, 558 residues long: Polypeptide N-acetylgalactosaminyltransferase 16 (558 aa).

The Cytoplasmic segment spans residues 1-6 (MRKIRA). Residues 7–26 (NAIAILTVAWILGTFYYLWQ) form a helical; Signal-anchor for type II membrane protein membrane-spanning segment. Topologically, residues 27-558 (DNRAHAASSS…AQQWQLLPHT (532 aa)) are lumenal. Over residues 34 to 46 (SSSGRGAQRAGGR) the composition is skewed to low complexity. Positions 34 to 53 (SSSGRGAQRAGGRPEQLRED) are disordered. 5 disulfide bridges follow: Cys113/Cys340, Cys331/Cys409, Cys441/Cys460, Cys486/Cys506, and Cys530/Cys543. The interval 122 to 227 (LPATSVIITF…VEWLQPMLQR (106 aa)) is catalytic subdomain A. Asp163 and Arg188 together coordinate substrate. Asp211 is a binding site for Mn(2+). Ser212 is a binding site for substrate. A Mn(2+)-binding site is contributed by His213. A catalytic subdomain B region spans residues 286-348 (PIRTPVIAGG…PCSRVGHVFR (63 aa)). Residue Trp317 participates in substrate binding. His345 contributes to the Mn(2+) binding site. 3 residues coordinate substrate: Arg348, His351, and Tyr353. The region spanning 428–555 (KEVLPGVIKQ…DAQAQQWQLL (128 aa)) is the Ricin B-type lectin domain.

The protein belongs to the glycosyltransferase 2 family. GalNAc-T subfamily. Mn(2+) is required as a cofactor. In the CNS, it is predominantly expressed in several distinct hypothalamic, thalamic and amygdaloid nuclei. The most abundant level of expression is in the paraventricular, ventromedial and arcuate nuclei of the hypothalamus, the anterodorsal and parafascicular nuclei of the thalamus and the central, basomedial and medial nuclei of the amygdala. Also expressed in cerebral cortex, lateral septum, habenula and hippocampus.

The protein resides in the golgi apparatus membrane. It carries out the reaction L-seryl-[protein] + UDP-N-acetyl-alpha-D-galactosamine = a 3-O-[N-acetyl-alpha-D-galactosaminyl]-L-seryl-[protein] + UDP + H(+). The enzyme catalyses L-threonyl-[protein] + UDP-N-acetyl-alpha-D-galactosamine = a 3-O-[N-acetyl-alpha-D-galactosaminyl]-L-threonyl-[protein] + UDP + H(+). Its pathway is protein modification; protein glycosylation. Its function is as follows. Catalyzes the initial reaction in O-linked oligosaccharide biosynthesis, the transfer of an N-acetyl-D-galactosamine residue to a serine or threonine residue on the protein receptor. This Mus musculus (Mouse) protein is Polypeptide N-acetylgalactosaminyltransferase 16 (Galnt16).